Consider the following 516-residue polypeptide: Probable cytochrome P450 9f2 (516 aa).

Cysteine 460 provides a ligand contact to heme.

Belongs to the cytochrome P450 family. Heme serves as cofactor.

The protein localises to the endoplasmic reticulum membrane. It localises to the microsome membrane. Functionally, may be involved in the metabolism of insect hormones and in the breakdown of synthetic insecticides. The chain is Probable cytochrome P450 9f2 (Cyp9f2) from Drosophila melanogaster (Fruit fly).